The chain runs to 418 residues: Thermolabile hemolysin (418 aa).

The signal sequence occupies residues 1-19 (MMKKTITLLTALLPLASAV). Ser-153 functions as the Nucleophile in the catalytic mechanism. Residues Asp-390 and His-393 contribute to the active site.

It belongs to the 'GDSL' lipolytic enzyme family. Post-translationally, there are two forms of LDH. The LDH(S) may be a protein in which 13 residues of the N-terminal of LDH(L) are deleted.

It localises to the secreted. In terms of biological role, phospholipase hydrolyzing both fatty acid esters of phospholipid, i.e. it hydrolyzes phosphatidylcholine (PC) to lysophosphatidylcholine (LPC) and then LPC to glycerophosphorylcholine (GPC). In Vibrio parahaemolyticus serotype O3:K6 (strain RIMD 2210633), this protein is Thermolabile hemolysin.